Reading from the N-terminus, the 182-residue chain is uncharacterized protein (182 aa).

This sequence belongs to the mimivirus L6/L7/L57 family.

This is an uncharacterized protein from Acanthamoeba polyphaga mimivirus (APMV).